The chain runs to 465 residues: UPF0324 membrane protein CC_0425 (465 aa).

Residues 97 to 132 (HRQPDRAPPARASEQPLRQGRRALRRRPDQRRHRPR) are disordered. Basic residues predominate over residues 115-132 (QGRRALRRRPDQRRHRPR). The next 10 membrane-spanning stretches (helical) occupy residues 135-157 (AAALRLGAARIGPGLLAGLLMAV), 172-194 (LLAVVLGMMLGALGLQGQLGAGL), 219-241 (AALGGPAVLASGAVVLGGLGIGA), 251-273 (LAEALIAAAACSICGASAALAAS), 286-308 (TALVIVGVNLLSTVAMLAYPPIA), 318-340 (AGVFFGLSIHDVAQVAGAGASVS), 352-374 (LSRILWLGPAVVLIGLMLTRTAQ), 378-400 (ISGLQAPPLFVWGFAALAAARGL), 405-427 (PALVSALGACSGFLLLAGVGAIS), and 442-464 (LAILLVTLTVAVAILAYALTRIF).

This sequence belongs to the UPF0324 family.

Its subcellular location is the cell membrane. This is UPF0324 membrane protein CC_0425 from Caulobacter vibrioides (strain ATCC 19089 / CIP 103742 / CB 15) (Caulobacter crescentus).